Reading from the N-terminus, the 258-residue chain is MNTQTTPSPQFYLTAPAACPYLPHEMERKVFTHLVGPRAAEMNDILTQGGFRRSQNIAYRPACESCRACVSVRILAQEFEPTKSMKRVLAANSDVIATEFAAQPSSEQYSLFRRYLDFRHQQGGMSDMTVLDYAIMVEDTHVNTRIIEYRRREEGSGLEERPKGELLAAALTDTMSDGLSMVYSYFNPALERRSLGTFMILDHVRRTKALGLPHVYLGYWVQGSRKMDYKTRFQPQEHLTPRGWERFDPSSMPESTHD.

The protein belongs to the R-transferase family. Bpt subfamily.

The protein resides in the cytoplasm. The enzyme catalyses N-terminal L-glutamyl-[protein] + L-leucyl-tRNA(Leu) = N-terminal L-leucyl-L-glutamyl-[protein] + tRNA(Leu) + H(+). The catalysed reaction is N-terminal L-aspartyl-[protein] + L-leucyl-tRNA(Leu) = N-terminal L-leucyl-L-aspartyl-[protein] + tRNA(Leu) + H(+). Its function is as follows. Functions in the N-end rule pathway of protein degradation where it conjugates Leu from its aminoacyl-tRNA to the N-termini of proteins containing an N-terminal aspartate or glutamate. The protein is Aspartate/glutamate leucyltransferase of Rhizobium etli (strain ATCC 51251 / DSM 11541 / JCM 21823 / NBRC 15573 / CFN 42).